We begin with the raw amino-acid sequence, 353 residues long: C-C chemokine receptor type 8 (353 aa).

At 1–33 (MDYTMEPNVTMTDYYPDFFTAPCDAEFLLRGSM) the chain is on the extracellular side. N-linked (GlcNAc...) asparagine glycosylation occurs at Asn8. The helical transmembrane segment at 34–61 (LYLAILYCVLFVLGLLGNSLVILVLVGC) threads the bilayer. Residues 62-71 (KKLRSITDIY) are Cytoplasmic-facing. Residues 72–91 (LLNLAASDLLFVLSIPFQTH) traverse the membrane as a helical segment. The Extracellular segment spans residues 92 to 105 (NLLDQWVFGTAMCK). A disulfide bridge connects residues Cys104 and Cys181. A helical membrane pass occupies residues 106-127 (VVSGLYYIGFFSSMFFITLMSV). Topologically, residues 128-144 (DRYLAIVHAVYAIKVRT) are cytoplasmic. The helical transmembrane segment at 145-169 (ASVGTALSLTVWLAAVTATIPLMVF) threads the bilayer. Residues 170–200 (YQVASEDGMLQCFQFYEEQSLRWKLFTHFEI) are Extracellular-facing. The chain crosses the membrane as a helical span at residues 201 to 220 (NALGLLLPFAILLFCYVRIL). Topologically, residues 221-236 (QQLRGCLNHNRTRAIK) are cytoplasmic. Residues 237–261 (LVLTVVIVSLLFWVPFNVALFLTSL) traverse the membrane as a helical segment. Residues 262–278 (HDLHILDGCATRQRLAL) are Extracellular-facing. Residues 279–302 (AIHVTEVISFTHCCVNPVIYAFIG) form a helical membrane-spanning segment. The Cytoplasmic segment spans residues 303-353 (EKFKKHLMDVFQKSCSHIFLYLGRQMPVGALERQLSSNQRSSHSSTLDDIL).

It belongs to the G-protein coupled receptor 1 family. As to expression, expressed in thymus.

The protein localises to the cell membrane. Functionally, receptor for the CCL1/SCY1/TCA-3 chemokine. The polypeptide is C-C chemokine receptor type 8 (Ccr8) (Mus musculus (Mouse)).